A 170-amino-acid chain; its full sequence is UPF0260 protein RPB_3505 (170 aa).

This sequence belongs to the UPF0260 family.

This chain is UPF0260 protein RPB_3505, found in Rhodopseudomonas palustris (strain HaA2).